The chain runs to 245 residues: Demethylmenaquinone methyltransferase (245 aa).

S-adenosyl-L-methionine contacts are provided by residues T70, D90, and 118-119 (DC).

The protein belongs to the class I-like SAM-binding methyltransferase superfamily. MenG/UbiE family.

It carries out the reaction a 2-demethylmenaquinol + S-adenosyl-L-methionine = a menaquinol + S-adenosyl-L-homocysteine + H(+). It participates in quinol/quinone metabolism; menaquinone biosynthesis; menaquinol from 1,4-dihydroxy-2-naphthoate: step 2/2. Functionally, methyltransferase required for the conversion of demethylmenaquinol (DMKH2) to menaquinol (MKH2). This chain is Demethylmenaquinone methyltransferase, found in Bacteroides fragilis (strain ATCC 25285 / DSM 2151 / CCUG 4856 / JCM 11019 / LMG 10263 / NCTC 9343 / Onslow / VPI 2553 / EN-2).